A 125-amino-acid polypeptide reads, in one-letter code: Large ribosomal subunit protein bL12 (125 aa).

This sequence belongs to the bacterial ribosomal protein bL12 family. As to quaternary structure, homodimer. Part of the ribosomal stalk of the 50S ribosomal subunit. Forms a multimeric L10(L12)X complex, where L10 forms an elongated spine to which 2 to 4 L12 dimers bind in a sequential fashion. Binds GTP-bound translation factors.

Forms part of the ribosomal stalk which helps the ribosome interact with GTP-bound translation factors. Is thus essential for accurate translation. In Caldanaerobacter subterraneus subsp. tengcongensis (strain DSM 15242 / JCM 11007 / NBRC 100824 / MB4) (Thermoanaerobacter tengcongensis), this protein is Large ribosomal subunit protein bL12.